The primary structure comprises 433 residues: Enolase (433 aa).

Q167 lines the (2R)-2-phosphoglycerate pocket. The active-site Proton donor is E209. The Mg(2+) site is built by D246, E291, and D318. (2R)-2-phosphoglycerate contacts are provided by K343, R372, S373, and K394. K343 serves as the catalytic Proton acceptor.

The protein belongs to the enolase family. In terms of assembly, component of the RNA degradosome, a multiprotein complex involved in RNA processing and mRNA degradation. Mg(2+) serves as cofactor.

Its subcellular location is the cytoplasm. It is found in the secreted. It localises to the cell surface. It catalyses the reaction (2R)-2-phosphoglycerate = phosphoenolpyruvate + H2O. It participates in carbohydrate degradation; glycolysis; pyruvate from D-glyceraldehyde 3-phosphate: step 4/5. Functionally, catalyzes the reversible conversion of 2-phosphoglycerate (2-PG) into phosphoenolpyruvate (PEP). It is essential for the degradation of carbohydrates via glycolysis. This is Enolase from Shewanella piezotolerans (strain WP3 / JCM 13877).